The following is a 296-amino-acid chain: Glycine--tRNA ligase alpha subunit (296 aa).

The protein belongs to the class-II aminoacyl-tRNA synthetase family. In terms of assembly, tetramer of two alpha and two beta subunits.

Its subcellular location is the cytoplasm. The enzyme catalyses tRNA(Gly) + glycine + ATP = glycyl-tRNA(Gly) + AMP + diphosphate. This chain is Glycine--tRNA ligase alpha subunit, found in Francisella tularensis subsp. holarctica (strain FTNF002-00 / FTA).